Reading from the N-terminus, the 528-residue chain is Acid-sensing ion channel 1 (528 aa).

Residues 1 to 49 (MELKAEEEEVGGVQPVSIQAFASSSTLHGLAHIFSYERLSLKRALWALC) lie on the Cytoplasmic side of the membrane. Residues 50-66 (FLGSLAVLLCVCTERVQ) form a helical membrane-spanning segment. Over 67 to 427 (YYFHYHHVTK…ETIEQKKAYE (361 aa)) the chain is Extracellular. Disulfide bonds link C93–C194, C172–C179, C290–C367, C310–C363, C314–C361, C323–C345, and C325–C337. N-linked (GlcNAc...) asparagine glycans are attached at residues N368 and N395. The discontinuously helical transmembrane segment at 428–458 (IAGLLGDIGGQMGLFIGASILTVLELFDYAY) threads the bilayer. Positions 444–446 (GAS) match the GAS motif; ion selectivity filter motif. At 459-528 (EVIKHKLCRR…ARGTFEDFTC (70 aa)) the chain is on the cytoplasmic side. S479 carries the phosphoserine; by PKA modification. Position 499 is a phosphoserine (S499).

Belongs to the amiloride-sensitive sodium channel (TC 1.A.6) family. ASIC1 subfamily. In terms of assembly, forms functional homotrimeric channels. Forms heterotrimers with other ASIC proteins, resulting in channels with distinct properties. Interacts with PICK1; regulates ASIC1 clustering in membranes. Interacts with STOM; alters heterotrimeric channels activity. Post-translationally, pH-gating could be regulated by serine proteases. Phosphorylation by PKA regulates interaction with PICK1 and subcellular localization. Phosphorylation by PKC may regulate the channel. As to expression, expressed in neurons throughout the central and peripheral nervous system.

The protein localises to the cell membrane. It localises to the postsynaptic cell membrane. It is found in the cell projection. Its subcellular location is the dendrite. The enzyme catalyses Na(+)(in) = Na(+)(out). It catalyses the reaction K(+)(in) = K(+)(out). The catalysed reaction is Li(+)(in) = Li(+)(out). It carries out the reaction Ca(2+)(in) = Ca(2+)(out). Its activity is regulated as follows. Potentiated by FMRFamide-related neuropeptides, which are induced during inflammation and modulate pain responses. Inhibited by the diuretic drug amiloride. Spider venom psalmotoxin-1 inhibits the channel by locking it in its desensitized conformation. The homotrimeric channel is inhibited by the spider venom pi-theraphotoxin-Hm3a. Homotrimeric and heterotrimeric (with ASIC2 isoform 1) channels are inhibited by the snake venom mambalgin-1, which prevents proton-induced transitions from the resting closed state to the active and/or desensitized states. Inhibited by Texas coral snake toxin MitTx1. Functionally, forms voltage-independent, pH-gated trimeric sodium channels that act as postsynaptic excitatory receptors in the nervous system, playing a crucial role in regulating synaptic plasticity, learning, and memory. Upon extracellular pH drop this channel elicits transient, fast activating, and completely desensitizing inward currents. Displays high selectivity for sodium ions but can also permit the permeation of other cations. Regulates more or less directly intracellular calcium concentration and CaMKII phosphorylation, and thereby the density of dendritic spines. Modulates neuronal activity in the circuits underlying innate fear. Has high selectivity for sodium ions, but can also be permeable to other cations including calcium, lithium and potassium. In terms of biological role, produces acid activated currents with a reduced amplitude and inactivates faster. Has high selectivity for sodium ions but also supports a calcium-mediated current which is sustained and maintained as long as acidic conditions are present. Also potentially permeable to lithium and potassium. Its function is as follows. Has no measurable proton-gated sodium channel activity in vitro. This is Acid-sensing ion channel 1 from Homo sapiens (Human).